A 335-amino-acid polypeptide reads, in one-letter code: Rho guanine nucleotide exchange factor 39 (335 aa).

In terms of domain architecture, DH spans 22–197 (KRACTARELL…SETAQRVHTI (176 aa)). Positions 227 to 331 (WFLRQGWLLV…WYHSLTWAIS (105 aa)) constitute a PH domain.

Strongly expressed in hepatocellular carcinoma (HCC) compared with their non-cancerous counterparts.

It localises to the cell membrane. Functionally, promotes cell proliferation. The polypeptide is Rho guanine nucleotide exchange factor 39 (ARHGEF39) (Homo sapiens (Human)).